A 156-amino-acid polypeptide reads, in one-letter code: Nucleoredoxin-like protein 2 (156 aa).

A Thioredoxin domain is found at 9–147 (HLVTCKGATV…LACFQDWVEA (139 aa)).

It belongs to the nucleoredoxin family.

In terms of biological role, may be involved in the maintenance of both the function and the viability of sensory neurons, including photoreceptors and olfactory neurons. This chain is Nucleoredoxin-like protein 2 (NXNL2), found in Homo sapiens (Human).